We begin with the raw amino-acid sequence, 603 residues long: Serine/threonine-protein kinase PLK1 (603 aa).

A disordered region spans residues 1 to 35; sequence MSAAVTAGKLARAPADPGKAGVPGVAAPGAPAAAP. Position 2 is an N-acetylserine (serine 2). Threonine 6 is modified (phosphothreonine). Residues 13–35 are compositionally biased toward low complexity; the sequence is APADPGKAGVPGVAAPGAPAAAP. Lysine 19 is covalently cross-linked (Glycyl lysine isopeptide (Lys-Gly) (interchain with G-Cter in ubiquitin)). Positions 53-305 constitute a Protein kinase domain; the sequence is YVRGRFLGKG…INELLNDEFF (253 aa). ATP-binding positions include 59–67 and lysine 82; that span reads LGKGGFAKC. Serine 103 carries the phosphoserine modification. Glutamate 131 is a binding site for ATP. A Phosphoserine modification is found at serine 137. Aspartate 176 serves as the catalytic Proton acceptor. ATP is bound by residues 178-181 and aspartate 194; that span reads KLGN. Positions 194-221 are activation loop; the sequence is DFGLATKVEYDGERKKTLCGTPNYIAPE. Threonine 210 is subject to Phosphothreonine; by AURKA. Threonine 214 bears the Phosphothreonine mark. Serine 269 is modified (phosphoserine; by autocatalysis). At serine 335 the chain carries Phosphoserine. Positions 337-340 match the D-box that targets the protein for proteasomal degradation in anaphase motif; it reads RKPL. Lysine 338 is covalently cross-linked (Glycyl lysine isopeptide (Lys-Gly) (interchain with G-Cter in SUMO2)). Residues 338-364 form a disordered region; sequence KPLTVLNKGLENPLPERPREKEEPVVR. Residues 351-364 are compositionally biased toward basic and acidic residues; it reads LPERPREKEEPVVR. Phosphoserine occurs at positions 375 and 450. Positions 410–488 constitute a POLO box 1 domain; sequence WVSKWVDYSD…LKYFRNYMSE (79 aa). Lysine 492 is covalently cross-linked (Glycyl lysine isopeptide (Lys-Gly) (interchain with G-Cter in ubiquitin)). Residues 493–507 are linker; that stretch reads AGANITPREGDELAR. Threonine 498 is subject to Phosphothreonine. The POLO box 2 domain maps to 510-592; it reads YLRTWFRTRS…ARTMVDKLLS (83 aa). The important for interaction with phosphorylated proteins stretch occupies residues 538–540; sequence HTK.

It belongs to the protein kinase superfamily. Ser/Thr protein kinase family. CDC5/Polo subfamily. As to quaternary structure, interacts with CEP170. Interacts with EVI5. Interacts with FAM29A. Interacts with SLX4/BTBD12. Interacts with TTDN1. Interacts (via POLO-box domain) with the phosphorylated form of BUB1, CDC25C and CENPU. Interacts with KIF2A. Interacts with CYLD. Part of an astrin (SPAG5)-kinastrin (SKAP) complex containing KNSTRN, SPAG5, PLK1, DYNLL1 and SGO2. Interacts with BIRC6/bruce. Interacts with CDK1-phosphorylated FRY; this interaction occurs in mitotic cells, but not in interphase cells. FRY interaction facilitates AURKA-mediated PLK1 phosphorylation. Interacts with CDK1-phosphorylated DCTN6 during mitotic prometaphase; the interaction facilitates recruitment to kinetochores. Interacts with CEP68; the interaction phosphorylates CEP68. Interacts (via POLO-box domain) with DCTN1. Interacts with CEP20 in later G1, S, G2 and M phases of the cell cycle; this interaction recruits PLK1 to centrosomes, a step required for S phase progression. Interacts with KLHL22. Interacts (via POLO box domains) with NEDD9/HEF1 (via C-terminus). Interacts with FIRRM (via N-terminus region); required for maintaining, but not activating, PLK1 kinase activity. Interacts with FZR1. Interacts with SKA3; the interaction promotes the stability of PLK1; the interaction promotes the stability of PLK1. Interacts with the MTMR3:MTMR4 heterooligomer; brings CEP55 and PLK1 together during early mitosis, regulating the phosphorylation of CEP55 by PLK1 and its recruitment to the midbody where it can mediate cell abscission. In terms of processing, catalytic activity is enhanced by phosphorylation of Thr-210. Phosphorylation at Thr-210 is first detected on centrosomes in the G2 phase of the cell cycle, peaks in prometaphase and gradually disappears from centrosomes during anaphase. Dephosphorylation at Thr-210 at centrosomes is probably mediated by protein phosphatase 1C (PP1C), via interaction with PPP1R12A/MYPT1. Autophosphorylation and phosphorylation of Ser-137 may not be significant for the activation of PLK1 during mitosis, but may enhance catalytic activity during recovery after DNA damage checkpoint. Phosphorylated in vitro by STK10. Ubiquitinated by the anaphase promoting complex/cyclosome (APC/C) in anaphase and following DNA damage, leading to its degradation by the proteasome. Ubiquitination is mediated via its interaction with FZR1/CDH1. Ubiquitination and subsequent degradation prevents entry into mitosis and is essential to maintain an efficient G2 DNA damage checkpoint. Monoubiquitination at Lys-492 by the BCR(KLHL22) ubiquitin ligase complex does not lead to degradation: it promotes PLK1 dissociation from phosphoreceptor proteins and subsequent removal from kinetochores, allowing silencing of the spindle assembly checkpoint (SAC) and chromosome segregation. In terms of tissue distribution, placenta and colon.

It localises to the nucleus. The protein localises to the chromosome. The protein resides in the centromere. It is found in the kinetochore. Its subcellular location is the cytoplasm. It localises to the cytoskeleton. The protein localises to the microtubule organizing center. The protein resides in the centrosome. It is found in the spindle. Its subcellular location is the midbody. The enzyme catalyses L-seryl-[protein] + ATP = O-phospho-L-seryl-[protein] + ADP + H(+). It catalyses the reaction L-threonyl-[protein] + ATP = O-phospho-L-threonyl-[protein] + ADP + H(+). Its activity is regulated as follows. Activated by phosphorylation of Thr-210 by AURKA; phosphorylation by AURKA is enhanced by BORA. Once activated, activity is stimulated by binding target proteins. Binding of target proteins has no effect on the non-activated kinase. Several inhibitors targeting PLKs are currently in development and are under investigation in a growing number of clinical trials, such as BI 2536, an ATP-competitive PLK1 inhibitor or BI 6727, a dihydropteridinone that specifically inhibits the catalytic activity of PLK1. Functionally, serine/threonine-protein kinase that performs several important functions throughout M phase of the cell cycle, including the regulation of centrosome maturation and spindle assembly, the removal of cohesins from chromosome arms, the inactivation of anaphase-promoting complex/cyclosome (APC/C) inhibitors, and the regulation of mitotic exit and cytokinesis. Polo-like kinase proteins act by binding and phosphorylating proteins that are already phosphorylated on a specific motif recognized by the POLO box domains. Phosphorylates BORA, BUB1B/BUBR1, CCNB1, CDC25C, CEP55, ECT2, ERCC6L, FBXO5/EMI1, FOXM1, KIF20A/MKLP2, CENPU, NEDD1, NINL, NPM1, NUDC, PKMYT1/MYT1, KIZ, MRE11, PPP1R12A/MYPT1, POLQ, PRC1, RACGAP1/CYK4, RAD51, RHNO1, SGO1, STAG2/SA2, TEX14, TOPORS, p73/TP73, TPT1, WEE1 and HNRNPU. Plays a key role in centrosome functions and the assembly of bipolar spindles by phosphorylating KIZ, NEDD1 and NINL. NEDD1 phosphorylation promotes subsequent targeting of the gamma-tubulin ring complex (gTuRC) to the centrosome, an important step for spindle formation. Phosphorylation of NINL component of the centrosome leads to NINL dissociation from other centrosomal proteins. Involved in mitosis exit and cytokinesis by phosphorylating CEP55, ECT2, KIF20A/MKLP2, CENPU, PRC1 and RACGAP1. Recruited at the central spindle by phosphorylating and docking PRC1 and KIF20A/MKLP2; creates its own docking sites on PRC1 and KIF20A/MKLP2 by mediating phosphorylation of sites subsequently recognized by the POLO box domains. Phosphorylates RACGAP1, thereby creating a docking site for the Rho GTP exchange factor ECT2 that is essential for the cleavage furrow formation. Promotes the central spindle recruitment of ECT2. Plays a central role in G2/M transition of mitotic cell cycle by phosphorylating CCNB1, CDC25C, FOXM1, CENPU, PKMYT1/MYT1, PPP1R12A/MYPT1 and WEE1. Part of a regulatory circuit that promotes the activation of CDK1 by phosphorylating the positive regulator CDC25C and inhibiting the negative regulators WEE1 and PKMYT1/MYT1. Also acts by mediating phosphorylation of cyclin-B1 (CCNB1) on centrosomes in prophase. Phosphorylates FOXM1, a key mitotic transcription regulator, leading to enhance FOXM1 transcriptional activity. Involved in kinetochore functions and sister chromatid cohesion by phosphorylating BUB1B/BUBR1, FBXO5/EMI1 and STAG2/SA2. PLK1 is high on non-attached kinetochores suggesting a role of PLK1 in kinetochore attachment or in spindle assembly checkpoint (SAC) regulation. Required for kinetochore localization of BUB1B. Regulates the dissociation of cohesin from chromosomes by phosphorylating cohesin subunits such as STAG2/SA2. Phosphorylates SGO1: required for spindle pole localization of isoform 3 of SGO1 and plays a role in regulating its centriole cohesion function. Mediates phosphorylation of FBXO5/EMI1, a negative regulator of the APC/C complex during prophase, leading to FBXO5/EMI1 ubiquitination and degradation by the proteasome. Acts as a negative regulator of p53 family members: phosphorylates TOPORS, leading to inhibit the sumoylation of p53/TP53 and simultaneously enhance the ubiquitination and subsequent degradation of p53/TP53. Phosphorylates the transactivation domain of the transcription factor p73/TP73, leading to inhibit p73/TP73-mediated transcriptional activation and pro-apoptotic functions. Phosphorylates BORA, and thereby promotes the degradation of BORA. Contributes to the regulation of AURKA function. Also required for recovery after DNA damage checkpoint and entry into mitosis. Phosphorylates MISP, leading to stabilization of cortical and astral microtubule attachments required for proper spindle positioning. Together with MEIKIN, acts as a regulator of kinetochore function during meiosis I: required both for mono-orientation of kinetochores on sister chromosomes and protection of centromeric cohesin from separase-mediated cleavage. Phosphorylates CEP68 and is required for its degradation. Regulates nuclear envelope breakdown during prophase by phosphorylating DCTN1 resulting in its localization in the nuclear envelope. Phosphorylates the heat shock transcription factor HSF1, promoting HSF1 nuclear translocation upon heat shock. Phosphorylates HSF1 also in the early mitotic period; this phosphorylation regulates HSF1 localization to the spindle pole, the recruitment of the SCF(BTRC) ubiquitin ligase complex induicing HSF1 degradation, and hence mitotic progression. Regulates mitotic progression by phosphorylating RIOK2. Through the phosphorylation of DZIP1 regulates the localization during mitosis of the BBSome, a ciliary protein complex involved in cilium biogenesis. Regulates DNA repair during mitosis by mediating phosphorylation of POLQ and RHNO1, thereby promoting POLQ recruitment to DNA damage sites. Phosphorylates ATXN10 which may play a role in the regulation of cytokinesis and may stimulate the proteasome-mediated degradation of ATXN10. In Homo sapiens (Human), this protein is Serine/threonine-protein kinase PLK1 (PLK1).